A 322-amino-acid polypeptide reads, in one-letter code: Solute carrier family 35 member B1 (322 aa).

A run of 8 helical transmembrane segments spans residues leucine 12–glutamine 32, phenylalanine 51–isoleucine 71, tryptophan 85–leucine 105, tyrosine 136–tyrosine 156, threonine 168–valine 188, leucine 210–leucine 230, isoleucine 243–tyrosine 263, and valine 285–leucine 305. The short motif at lysine 318–histidine 322 is the Di-lysine motif element.

The protein belongs to the nucleotide-sugar transporter family. SLC35B subfamily.

The protein localises to the endoplasmic reticulum membrane. It carries out the reaction ADP(in) + ATP(out) = ADP(out) + ATP(in). The enzyme catalyses UDP(out) + ATP(in) = UDP(in) + ATP(out). It catalyses the reaction UTP(out) + ATP(in) = UTP(in) + ATP(out). The catalysed reaction is dATP(out) + ATP(in) = dATP(in) + ATP(out). Its function is as follows. ATP:ADP antiporter that catalyzes the exchange of ATP and ADP across the endoplasmic reticulum (ER) membrane. Imports ATP from the cytosol to the ER lumen and exports ADP in the opposite direction. Regulates ER energy metabolism and protein biogenesis. Appears to be part of a calcium-dependent ER to cytosol low energy response axis, where calcium efflux from ER to the cytosol triggers ATP import into the ER lumen to maintain sufficient ATP supply. Provides ATP to ER chaperone HSPA5 that drives protein folding and trafficking in the ER. Can transport dATP, UTP or UDP in exchange for ATP, but the physiological relevance of this process remains to be established. This is Solute carrier family 35 member B1 (Slc35b1) from Mus musculus (Mouse).